The following is a 248-amino-acid chain: Aspartate/glutamate leucyltransferase (248 aa).

This sequence belongs to the R-transferase family. Bpt subfamily.

It localises to the cytoplasm. It carries out the reaction N-terminal L-glutamyl-[protein] + L-leucyl-tRNA(Leu) = N-terminal L-leucyl-L-glutamyl-[protein] + tRNA(Leu) + H(+). The enzyme catalyses N-terminal L-aspartyl-[protein] + L-leucyl-tRNA(Leu) = N-terminal L-leucyl-L-aspartyl-[protein] + tRNA(Leu) + H(+). Functions in the N-end rule pathway of protein degradation where it conjugates Leu from its aminoacyl-tRNA to the N-termini of proteins containing an N-terminal aspartate or glutamate. This Polynucleobacter asymbioticus (strain DSM 18221 / CIP 109841 / QLW-P1DMWA-1) (Polynucleobacter necessarius subsp. asymbioticus) protein is Aspartate/glutamate leucyltransferase.